Reading from the N-terminus, the 272-residue chain is 2-succinyl-6-hydroxy-2,4-cyclohexadiene-1-carboxylate synthase (272 aa).

This sequence belongs to the AB hydrolase superfamily. MenH family. Monomer.

It carries out the reaction 5-enolpyruvoyl-6-hydroxy-2-succinyl-cyclohex-3-ene-1-carboxylate = (1R,6R)-6-hydroxy-2-succinyl-cyclohexa-2,4-diene-1-carboxylate + pyruvate. Its pathway is quinol/quinone metabolism; 1,4-dihydroxy-2-naphthoate biosynthesis; 1,4-dihydroxy-2-naphthoate from chorismate: step 3/7. The protein operates within quinol/quinone metabolism; menaquinone biosynthesis. Functionally, catalyzes a proton abstraction reaction that results in 2,5-elimination of pyruvate from 2-succinyl-5-enolpyruvyl-6-hydroxy-3-cyclohexene-1-carboxylate (SEPHCHC) and the formation of 2-succinyl-6-hydroxy-2,4-cyclohexadiene-1-carboxylate (SHCHC). This is 2-succinyl-6-hydroxy-2,4-cyclohexadiene-1-carboxylate synthase from Yersinia pestis bv. Antiqua (strain Nepal516).